Reading from the N-terminus, the 133-residue chain is Small ribosomal subunit protein uS9 (133 aa).

The interval 102-133 (KPKGLLTRDPREVERKKYGLKKARRAPQFSKR) is disordered. The segment covering 107 to 118 (LTRDPREVERKK) has biased composition (basic and acidic residues). Residues 119–133 (YGLKKARRAPQFSKR) show a composition bias toward basic residues.

Belongs to the universal ribosomal protein uS9 family.

The protein is Small ribosomal subunit protein uS9 of Deinococcus deserti (strain DSM 17065 / CIP 109153 / LMG 22923 / VCD115).